Reading from the N-terminus, the 100-residue chain is Aspartyl/glutamyl-tRNA(Asn/Gln) amidotransferase subunit C (100 aa).

It belongs to the GatC family. Heterotrimer of A, B and C subunits.

It catalyses the reaction L-glutamyl-tRNA(Gln) + L-glutamine + ATP + H2O = L-glutaminyl-tRNA(Gln) + L-glutamate + ADP + phosphate + H(+). It carries out the reaction L-aspartyl-tRNA(Asn) + L-glutamine + ATP + H2O = L-asparaginyl-tRNA(Asn) + L-glutamate + ADP + phosphate + 2 H(+). Its function is as follows. Allows the formation of correctly charged Asn-tRNA(Asn) or Gln-tRNA(Gln) through the transamidation of misacylated Asp-tRNA(Asn) or Glu-tRNA(Gln) in organisms which lack either or both of asparaginyl-tRNA or glutaminyl-tRNA synthetases. The reaction takes place in the presence of glutamine and ATP through an activated phospho-Asp-tRNA(Asn) or phospho-Glu-tRNA(Gln). This chain is Aspartyl/glutamyl-tRNA(Asn/Gln) amidotransferase subunit C, found in Streptococcus agalactiae serotype III (strain NEM316).